Consider the following 185-residue polypeptide: Pyruvate/ketoisovalerate oxidoreductases common subunit gamma (185 aa).

Heterotetramer of one alpha, one beta, one delta and one gamma chain.

The catalysed reaction is 2 oxidized [2Fe-2S]-[ferredoxin] + pyruvate + CoA = 2 reduced [2Fe-2S]-[ferredoxin] + acetyl-CoA + CO2 + H(+). It catalyses the reaction 3-methyl-2-oxobutanoate + 2 oxidized [2Fe-2S]-[ferredoxin] + CoA = 2-methylpropanoyl-CoA + 2 reduced [2Fe-2S]-[ferredoxin] + CO2 + H(+). The sequence is that of Pyruvate/ketoisovalerate oxidoreductases common subunit gamma (porG) from Thermococcus kodakarensis (strain ATCC BAA-918 / JCM 12380 / KOD1) (Pyrococcus kodakaraensis (strain KOD1)).